The primary structure comprises 88 residues: Small ribosomal subunit protein bS18 (88 aa).

Belongs to the bacterial ribosomal protein bS18 family. As to quaternary structure, part of the 30S ribosomal subunit. Forms a tight heterodimer with protein bS6.

Binds as a heterodimer with protein bS6 to the central domain of the 16S rRNA, where it helps stabilize the platform of the 30S subunit. This is Small ribosomal subunit protein bS18 from Syntrophus aciditrophicus (strain SB).